Consider the following 228-residue polypeptide: uncharacterized protein (228 aa).

21 to 28 serves as a coordination point for ATP; that stretch reads GMIALGKT.

This is an uncharacterized protein from Mycoplasma genitalium (strain ATCC 33530 / DSM 19775 / NCTC 10195 / G37) (Mycoplasmoides genitalium).